A 57-amino-acid chain; its full sequence is Aminopeptidase A (57 aa).

Residues 1–57 (YLTDHYFKVDLNSTVTQQRFLLDPSELAGITIMQPSDSNIEWLKQYRDDVATWLENS) are Extracellular-facing. A glycan (N-linked (GlcNAc...) asparagine) is linked at Asn12.

It belongs to the peptidase M1 family. As to quaternary structure, homodimer; disulfide-linked. Zn(2+) is required as a cofactor.

The protein localises to the cell membrane. The enzyme catalyses Release of N-terminal glutamate (and to a lesser extent aspartate) from a peptide.. Inhibited by the aminopeptidase competitive inhibitors amastatin (Leu and acidic inhibitor), and bestatin (Leu inhibitor), by chelating agents EDTA, and 1,10-Phenanthroline, as well as by Zn(2+) ions. Substrate specificity is modulated by Ca(2+), Ba(2+), and Mn(2+) ions which enhances the enzymatic activity for cleavage of acidic residues. Functionally, venom protein that cleaves N-terminal acidic residues from peptides with high potency in presence of calcium. It may have several roles in venom including alteration of blood pressure by cleaving circulating angiotensin-2, general degradation of host tissue, increase of permeability to other venom components, and/or processing of other toxins in the venom. This is Aminopeptidase A from Gloydius blomhoffii (Mamushi).